A 704-amino-acid chain; its full sequence is Meprin A subunit beta (704 aa).

An N-terminal signal peptide occupies residues 1–20; the sequence is MDARHWPWFLVFATFLLVSG. Positions 21–64 are excised as a propeptide; that stretch reads LPAPEKFVKDIDGGIDQDIFDINEDLGLDLFEGDIKLEASGRNS. The Extracellular segment spans residues 21 to 654; that stretch reads LPAPEKFVKD…RCEKRGSTKD (634 aa). Residues 63–257 enclose the Peptidase M12A domain; it reads NSIIGDNYRW…LKLNQLYSCT (195 aa). 3 disulfides stabilise this stretch: Cys-104–Cys-256, Cys-125–Cys-145, and Cys-266–Cys-428. His-153 contacts Zn(2+). The active site involves Glu-154. 2 residues coordinate Zn(2+): His-157 and His-163. Asn-193, Asn-219, Asn-316, Asn-422, Asn-437, Asn-528, Asn-547, and Asn-592 each carry an N-linked (GlcNAc...) asparagine glycan. Positions 261–430 constitute an MAM domain; that stretch reads SFMDSCDFEL…INLSETRCPH (170 aa). The 155-residue stretch at 431–585 folds into the MATH domain; the sequence is HIWHIQNFTQ…GDDVYILLTV (155 aa). The EGF-like domain maps to 607-647; it reads VHNACSEVECQNGGICTLQEGRAECKCPAGEDWWYMGKRCE. Cystine bridges form between Cys-611–Cys-622, Cys-616–Cys-631, and Cys-633–Cys-646. The chain crosses the membrane as a helical span at residues 655-678; sequence TIVIAVSSTVTVFAVMLIITLISV. Residues 679–704 lie on the Cytoplasmic side of the membrane; the sequence is YCTRRKYRKKASAKTAAMNLENQHAF. Thr-693 bears the Phosphothreonine mark.

As to quaternary structure, homotetramer consisting of disulfide-linked beta subunits, or heterotetramer of two alpha and two beta subunits formed by non-covalent association of two disulfide-linked heterodimers. Interacts with MBL2 through its carbohydrate moiety. This interaction may inhibit its catalytic activity. Interacts with TSPAN8. Zn(2+) is required as a cofactor. Post-translationally, N-glycosylated; contains high mannose and/or complex biantennary structures. In terms of processing, proteolytically activated by trypsin in the intestinal lumen and kallikrein-related peptidases in other tissues. Phosphorylated by PKC at multiple sites of its cytoplasmic part. Phosphorylation dcreases activity at the cell surface, leading to diminished substrate cleavage. Kidney, intestinal brush borders and salivary ducts.

It is found in the cell membrane. It localises to the secreted. The catalysed reaction is Hydrolysis of proteins, including azocasein, and peptides. Hydrolysis of 5-His-|-Leu-6, 6-Leu-|-Cys-7, 14-Ala-|-Leu-15 and 19-Cys-|-Gly-20 bonds in insulin B chain.. Strongly inhibited by fetuin-A/AHSG. Membrane metallopeptidase that sheds many membrane-bound proteins. Exhibits a strong preference for acidic amino acids at the P1' position. Known substrates include: FGF19, VGFA, IL1B, IL18, procollagen I and III, E-cadherin, KLK7, gastrin, ADAM10, tenascin-C. The presence of several pro-inflammatory cytokine among substrates implicate MEP1B in inflammation. It is also involved in tissue remodeling due to its capability to degrade extracellular matrix components. The sequence is that of Meprin A subunit beta (Mep1b) from Rattus norvegicus (Rat).